A 150-amino-acid polypeptide reads, in one-letter code: Ribosomal RNA large subunit methyltransferase H (150 aa).

S-adenosyl-L-methionine contacts are provided by residues Leu71, Gly100, and 118-123; that span reads FSQMTF.

Belongs to the RNA methyltransferase RlmH family. In terms of assembly, homodimer.

It localises to the cytoplasm. It catalyses the reaction pseudouridine(1915) in 23S rRNA + S-adenosyl-L-methionine = N(3)-methylpseudouridine(1915) in 23S rRNA + S-adenosyl-L-homocysteine + H(+). Specifically methylates the pseudouridine at position 1915 (m3Psi1915) in 23S rRNA. The chain is Ribosomal RNA large subunit methyltransferase H from Mycoplasmopsis agalactiae (strain NCTC 10123 / CIP 59.7 / PG2) (Mycoplasma agalactiae).